Reading from the N-terminus, the 216-residue chain is ATP-dependent Clp protease proteolytic subunit (216 aa).

Residue Ser-120 is the Nucleophile of the active site. His-145 is a catalytic residue.

It belongs to the peptidase S14 family. Fourteen ClpP subunits assemble into 2 heptameric rings which stack back to back to give a disk-like structure with a central cavity, resembling the structure of eukaryotic proteasomes.

It localises to the cytoplasm. It carries out the reaction Hydrolysis of proteins to small peptides in the presence of ATP and magnesium. alpha-casein is the usual test substrate. In the absence of ATP, only oligopeptides shorter than five residues are hydrolyzed (such as succinyl-Leu-Tyr-|-NHMec, and Leu-Tyr-Leu-|-Tyr-Trp, in which cleavage of the -Tyr-|-Leu- and -Tyr-|-Trp bonds also occurs).. Cleaves peptides in various proteins in a process that requires ATP hydrolysis. Has a chymotrypsin-like activity. Plays a major role in the degradation of misfolded proteins. In Cupriavidus metallidurans (strain ATCC 43123 / DSM 2839 / NBRC 102507 / CH34) (Ralstonia metallidurans), this protein is ATP-dependent Clp protease proteolytic subunit.